A 75-amino-acid chain; its full sequence is Small ribosomal subunit protein bS18 (75 aa).

This sequence belongs to the bacterial ribosomal protein bS18 family. Part of the 30S ribosomal subunit. Forms a tight heterodimer with protein bS6.

Functionally, binds as a heterodimer with protein bS6 to the central domain of the 16S rRNA, where it helps stabilize the platform of the 30S subunit. The sequence is that of Small ribosomal subunit protein bS18 from Shewanella loihica (strain ATCC BAA-1088 / PV-4).